The primary structure comprises 348 residues: Ileal sodium/bile acid cotransporter (348 aa).

Topologically, residues 1-28 (MNDPNSCVDNATVCSGASCVVPESNFNN) are extracellular. N-linked (GlcNAc...) asparagine glycosylation is present at Asn-10. Residues 29-49 (ILSVVLSTVLTILLALVMFSM) form a helical membrane-spanning segment. Residues 50–82 (GCNVEIKKFLGHIKRPWGICVGFLCQFGIMPLT) are Cytoplasmic-facing. A helical transmembrane segment spans residues 83–103 (GFILSVAFDILPLQAVVVLII). Residues 104 to 126 (GCCPGGTASNILAYWVDGDMDLS) are Extracellular-facing. A helical membrane pass occupies residues 127-147 (VSMTTCSTLLALGMMPLCLLI). Residues 148 to 157 (YTKMWVDSGS) are Cytoplasmic-facing. A helical membrane pass occupies residues 158–178 (IVIPYDNIGTSLVSLVVPVSI). Over 179–195 (GMFVNHKWPQKAKIILK) the chain is Extracellular. A helical membrane pass occupies residues 196–216 (IGSIAGAILIVLIAVVGGILY). Residues 217–224 (QSAWIIAP) are Cytoplasmic-facing. The chain crosses the membrane as a helical span at residues 225-245 (KLWIIGTIFPVAGYSLGFLLA). Topologically, residues 246 to 284 (RIAGLPWYRCRTVAFETGMQNTQLCSTIVQLSFTPEELN) are extracellular. A helical membrane pass occupies residues 285 to 305 (VVFTFPLIYSIFQLAFAAIFL). The Cytoplasmic portion of the chain corresponds to 306–348 (GFYVAYKKCHGKNKAEIPESKENGTEPESSFYKANGGFQPDEK). Residues 320–329 (AEIPESKENG) are compositionally biased toward basic and acidic residues. A disordered region spans residues 320 to 348 (AEIPESKENGTEPESSFYKANGGFQPDEK). Ser-335 bears the Phosphoserine mark.

This sequence belongs to the bile acid:sodium symporter (BASS) (TC 2.A.28) family. Monomer and homodimer. Mainly expressed in ileum and kidney, lower expression in cecum.

Its subcellular location is the membrane. It catalyses the reaction taurocholate(out) + 2 Na(+)(out) = taurocholate(in) + 2 Na(+)(in). The catalysed reaction is cholate(out) + 2 Na(+)(out) = cholate(in) + 2 Na(+)(in). It carries out the reaction taurochenodeoxycholate(out) + 2 Na(+)(out) = taurochenodeoxycholate(in) + 2 Na(+)(in). The enzyme catalyses tauroursodeoxycholate(out) + 2 Na(+)(out) = tauroursodeoxycholate(in) + 2 Na(+)(in). It catalyses the reaction glycocholate(out) + 2 Na(+)(out) = glycocholate(in) + 2 Na(+)(in). The catalysed reaction is tauronorcholate(out) + 2 Na(+)(out) = tauronorcholate(in) + 2 Na(+)(in). It carries out the reaction tauroallocholate(out) + 2 Na(+)(out) = tauroallocholate(in) + 2 Na(+)(in). The enzyme catalyses taurodeoxycholate(out) + 2 Na(+)(out) = taurodeoxycholate(in) + 2 Na(+)(in). It catalyses the reaction tauro-beta-muricholate(out) + 2 Na(+)(out) = tauro-beta-muricholate(in) + 2 Na(+)(in). Its function is as follows. Plays a critical role in the sodium-dependent reabsorption of bile acids from the lumen of the small intestine. Transports various bile acids, unconjugated or conjugated, such as cholate and taurocholate. Also responsible for bile acid transport in the renal proximal tubules, a salvage mechanism that helps conserve bile acids. Works collaboratively with the Na(+)-taurocholate cotransporting polypeptide (NTCP), the organic solute transporter (OST), and the bile salt export pump (BSEP), to ensure efficacious biological recycling of bile acids during enterohepatic circulation. The sequence is that of Ileal sodium/bile acid cotransporter (SLC10A2) from Homo sapiens (Human).